A 318-amino-acid chain; its full sequence is Potassium channel subfamily K member 15 (318 aa).

Over 1-8 (MRKQSART) the chain is Cytoplasmic. The chain crosses the membrane as a helical span at residues 9–29 (AALILCILSYLLVGAAVFDAL). Residues 80 to 101 (FAGSFYFAITVITTIGYGHAAP) constitute an intramembrane region (pore-forming). A helical membrane pass occupies residues 108–128 (VFCMFYALLGIPLTLVTFQSL). Residues 129 to 158 (GERLNALVRCLLLAAKRCLGLRRPHVSAEN) are Cytoplasmic-facing. The helical transmembrane segment at 159–179 (MVVAGLLLCAATLALGAAAFA) threads the bilayer. The pore-forming intramembrane region spans 189–209 (AYYYCFITLTTIGFGDFVALQ). The chain crosses the membrane as a helical span at residues 223–243 (FSFLYILLGLTVIGAFLNLVV). Residues 244 to 318 (LRFLASAEAP…DRLRARRKSI (75 aa)) lie on the Cytoplasmic side of the membrane. The tract at residues 296–318 (LSPEAVHDCHSSPDRLRARRKSI) is disordered. Positions 300–311 (AVHDCHSSPDRL) are enriched in basic and acidic residues.

This sequence belongs to the two pore domain potassium channel (TC 1.A.1.8) family. In terms of assembly, heterodimer. In terms of processing, phosphorylated. Brain-specific. Highly expressed in auditory nuclei, in Purkinje cells and in olfactory bulb mitral cells.

Its subcellular location is the membrane. Probable potassium channel subunit. No channel activity observed in heterologous systems. May need to associate with another protein to form a functional channel. This Rattus norvegicus (Rat) protein is Potassium channel subfamily K member 15 (Kcnk15).